A 314-amino-acid chain; its full sequence is Ribosomal RNA small subunit methyltransferase H (314 aa).

S-adenosyl-L-methionine contacts are provided by residues 36 to 38 (GGH), Asp-56, Phe-82, Asp-104, and Gln-111.

Belongs to the methyltransferase superfamily. RsmH family.

Its subcellular location is the cytoplasm. It catalyses the reaction cytidine(1402) in 16S rRNA + S-adenosyl-L-methionine = N(4)-methylcytidine(1402) in 16S rRNA + S-adenosyl-L-homocysteine + H(+). Specifically methylates the N4 position of cytidine in position 1402 (C1402) of 16S rRNA. The chain is Ribosomal RNA small subunit methyltransferase H from Ectopseudomonas mendocina (strain ymp) (Pseudomonas mendocina).